Here is a 593-residue protein sequence, read N- to C-terminus: Proline--tRNA ligase (593 aa).

Belongs to the class-II aminoacyl-tRNA synthetase family. ProS type 1 subfamily. In terms of assembly, homodimer.

Its subcellular location is the cytoplasm. It catalyses the reaction tRNA(Pro) + L-proline + ATP = L-prolyl-tRNA(Pro) + AMP + diphosphate. In terms of biological role, catalyzes the attachment of proline to tRNA(Pro) in a two-step reaction: proline is first activated by ATP to form Pro-AMP and then transferred to the acceptor end of tRNA(Pro). As ProRS can inadvertently accommodate and process non-cognate amino acids such as alanine and cysteine, to avoid such errors it has two additional distinct editing activities against alanine. One activity is designated as 'pretransfer' editing and involves the tRNA(Pro)-independent hydrolysis of activated Ala-AMP. The other activity is designated 'posttransfer' editing and involves deacylation of mischarged Ala-tRNA(Pro). The misacylated Cys-tRNA(Pro) is not edited by ProRS. This chain is Proline--tRNA ligase, found in Synechococcus sp. (strain CC9605).